Here is a 98-residue protein sequence, read N- to C-terminus: Aspartyl/glutamyl-tRNA(Asn/Gln) amidotransferase subunit C (98 aa).

The protein belongs to the GatC family. Heterotrimer of A, B and C subunits.

The catalysed reaction is L-glutamyl-tRNA(Gln) + L-glutamine + ATP + H2O = L-glutaminyl-tRNA(Gln) + L-glutamate + ADP + phosphate + H(+). The enzyme catalyses L-aspartyl-tRNA(Asn) + L-glutamine + ATP + H2O = L-asparaginyl-tRNA(Asn) + L-glutamate + ADP + phosphate + 2 H(+). In terms of biological role, allows the formation of correctly charged Asn-tRNA(Asn) or Gln-tRNA(Gln) through the transamidation of misacylated Asp-tRNA(Asn) or Glu-tRNA(Gln) in organisms which lack either or both of asparaginyl-tRNA or glutaminyl-tRNA synthetases. The reaction takes place in the presence of glutamine and ATP through an activated phospho-Asp-tRNA(Asn) or phospho-Glu-tRNA(Gln). This Arthrobacter sp. (strain FB24) protein is Aspartyl/glutamyl-tRNA(Asn/Gln) amidotransferase subunit C.